A 428-amino-acid polypeptide reads, in one-letter code: Serine--tRNA ligase (428 aa).

L-serine is bound at residue 231–233 (TAE). 262–264 (RSE) contributes to the ATP binding site. Glu285 lines the L-serine pocket. 349–352 (EISS) provides a ligand contact to ATP. Ser385 is a binding site for L-serine.

This sequence belongs to the class-II aminoacyl-tRNA synthetase family. Type-1 seryl-tRNA synthetase subfamily. Homodimer. The tRNA molecule binds across the dimer.

The protein localises to the cytoplasm. The enzyme catalyses tRNA(Ser) + L-serine + ATP = L-seryl-tRNA(Ser) + AMP + diphosphate + H(+). It catalyses the reaction tRNA(Sec) + L-serine + ATP = L-seryl-tRNA(Sec) + AMP + diphosphate + H(+). It functions in the pathway aminoacyl-tRNA biosynthesis; selenocysteinyl-tRNA(Sec) biosynthesis; L-seryl-tRNA(Sec) from L-serine and tRNA(Sec): step 1/1. Catalyzes the attachment of serine to tRNA(Ser). Is also able to aminoacylate tRNA(Sec) with serine, to form the misacylated tRNA L-seryl-tRNA(Sec), which will be further converted into selenocysteinyl-tRNA(Sec). In Staphylococcus carnosus (strain TM300), this protein is Serine--tRNA ligase.